The sequence spans 225 residues: MAADLAAMRVDYGGVPSGSGEDVDLDEAWLAGGWEPLLRNWIEQATAVDIAEPNAMVLATVAVVDGVPRPASRTVLCKGLSPEGVTFYTNYDSAKGTQLAAVPYAAATFVWPVLGRQVHLRGPVERTSAEQTAVYWRSRPRDSQLGAWASQQSRPIDSRAALDRALAEVTARFAGVDEIPVPPHWGGYLLRPEQVEFWQGRRGRLHNRLLVRVAGERMTVERLQP.

Substrate-binding positions include 9 to 12 (RVDY) and Lys-78. Residues 73–78 (RTVLCK), 88–89 (YT), Lys-95, and Gln-117 contribute to the FMN site. Substrate contacts are provided by Tyr-135, Arg-139, and Ser-143. FMN is bound by residues 152 to 153 (QS) and Trp-198. 204 to 206 (RLH) contacts substrate. Arg-208 is a binding site for FMN.

It belongs to the pyridoxamine 5'-phosphate oxidase family. As to quaternary structure, homodimer. Requires FMN as cofactor.

It catalyses the reaction pyridoxamine 5'-phosphate + O2 + H2O = pyridoxal 5'-phosphate + H2O2 + NH4(+). The catalysed reaction is pyridoxine 5'-phosphate + O2 = pyridoxal 5'-phosphate + H2O2. It functions in the pathway cofactor metabolism; pyridoxal 5'-phosphate salvage; pyridoxal 5'-phosphate from pyridoxamine 5'-phosphate: step 1/1. It participates in cofactor metabolism; pyridoxal 5'-phosphate salvage; pyridoxal 5'-phosphate from pyridoxine 5'-phosphate: step 1/1. Functionally, catalyzes the oxidation of either pyridoxine 5'-phosphate (PNP) or pyridoxamine 5'-phosphate (PMP) into pyridoxal 5'-phosphate (PLP). This Nocardia farcinica (strain IFM 10152) protein is Pyridoxine/pyridoxamine 5'-phosphate oxidase.